A 131-amino-acid polypeptide reads, in one-letter code: Histone H2A.1 (131 aa).

At S2 the chain carries N-acetylserine. K5 and K8 each carry N6-acetyllysine. N5-methylglutamine is present on Q106. The residue at position 128 (S128) is a Phosphoserine. The [ST]-Q motif motif lies at 128-129; it reads SQ.

This sequence belongs to the histone H2A family. As to quaternary structure, the nucleosome is a histone octamer containing two molecules each of H2A, H2B, H3 and H4 assembled in one H3-H4 heterotetramer and two H2A-H2B heterodimers. The octamer wraps approximately 147 bp of DNA. Phosphorylated to form H2AS128ph (gamma-H2A) in response to DNA double-strand breaks (DSBs) generated by exogenous genotoxic agents and by stalled replication forks. Phosphorylation is dependent on the DNA damage checkpoint kinases MEC1/ATR and TEL1/ATM, spreads on either side of a detected DSB site and may mark the surrounding chromatin for recruitment of proteins required for DNA damage signaling and repair. Gamma-H2A is removed from the DNA prior to the strand invasion-primer extension step of the repair process and subsequently dephosphorylated by PPH3, a component of the histone H2A phosphatase complex (HTP-C). Dephosphorylation is necessary for efficient recovery from the DNA damage checkpoint. Post-translationally, acetylated by ESA1 to form H2AK4ac and H2AK7ac.

It is found in the nucleus. The protein resides in the chromosome. Functionally, core component of nucleosome which plays a central role in DNA double strand break (DSB) repair. Nucleosomes wrap and compact DNA into chromatin, limiting DNA accessibility to the cellular machineries which require DNA as a template. Histones thereby play a central role in transcription regulation, DNA repair, DNA replication and chromosomal stability. DNA accessibility is regulated via a complex set of post-translational modifications of histones, also called histone code, and nucleosome remodeling. The chain is Histone H2A.1 (HTA1) from Candida glabrata (strain ATCC 2001 / BCRC 20586 / JCM 3761 / NBRC 0622 / NRRL Y-65 / CBS 138) (Yeast).